A 497-amino-acid polypeptide reads, in one-letter code: Glucose-6-phosphate isomerase (497 aa).

The Proton donor role is filled by Glu350. Residues His381 and Lys485 contribute to the active site.

Belongs to the GPI family.

It localises to the cytoplasm. The catalysed reaction is alpha-D-glucose 6-phosphate = beta-D-fructose 6-phosphate. The protein operates within carbohydrate biosynthesis; gluconeogenesis. It participates in carbohydrate degradation; glycolysis; D-glyceraldehyde 3-phosphate and glycerone phosphate from D-glucose: step 2/4. Functionally, catalyzes the reversible isomerization of glucose-6-phosphate to fructose-6-phosphate. This chain is Glucose-6-phosphate isomerase, found in Legionella pneumophila.